A 459-amino-acid polypeptide reads, in one-letter code: NADH-ubiquinone oxidoreductase chain 4 (459 aa).

Helical transmembrane passes span 20 to 42 (PKWLWSATTTHSLIIASLSLTLF), 61 to 81 (MISTPLIILTCWLLPLMIIAS), 103 to 123 (LQALLIMAFSATEIILFYIMF), 148 to 168 (IYFLFYTLAGSLPLLVALLYL), 194 to 214 (FLWVACVTAFLVKMPLYGVHL), 224 to 244 (PVAGSMILAAILLKLGGYGMI), 257 to 277 (LAYPFIILALWGIIMTGSICM), 284 to 303 (SLIAYSSVSHMGLVASGILI), 307 to 329 (WGFTGAIILMIAHGLTSSALFCL), 350 to 370 (IILPLMATWWFIMSLANMALP), 392 to 414 (TILLTGTGTLITASYSLYLYMSS), and 435 to 455 (LLLTLHIIPIILLMIKPELIW).

Belongs to the complex I subunit 4 family.

The protein resides in the mitochondrion membrane. It carries out the reaction a ubiquinone + NADH + 5 H(+)(in) = a ubiquinol + NAD(+) + 4 H(+)(out). In terms of biological role, core subunit of the mitochondrial membrane respiratory chain NADH dehydrogenase (Complex I) that is believed to belong to the minimal assembly required for catalysis. Complex I functions in the transfer of electrons from NADH to the respiratory chain. The immediate electron acceptor for the enzyme is believed to be ubiquinone. This Polypterus ornatipinnis (Ornate bichir) protein is NADH-ubiquinone oxidoreductase chain 4 (MT-ND4).